The chain runs to 122 residues: Probable DNA-directed RNA polymerase II subunit RPB11 (122 aa).

Belongs to the archaeal Rpo11/eukaryotic RPB11/RPC19 RNA polymerase subunit family. As to quaternary structure, component of the RNA polymerase II (Pol II) complex consisting of 12 subunits.

It is found in the nucleus. Functionally, DNA-dependent RNA polymerase catalyzes the transcription of DNA into RNA using the four ribonucleoside triphosphates as substrates. Component of RNA polymerase II which synthesizes mRNA precursors and many functional non-coding RNAs. Pol II is the central component of the basal RNA polymerase II transcription machinery. It is composed of mobile elements that move relative to each other. RPB11 is part of the core element with the central large cleft. The sequence is that of Probable DNA-directed RNA polymerase II subunit RPB11 (rpb-11) from Caenorhabditis elegans.